We begin with the raw amino-acid sequence, 381 residues long: Protein YkfC (381 aa).

Residues 72–337 form the Reverse transcriptase domain; that stretch reads LRDELLSGHY…DGFIFLGHRL (266 aa). Mg(2+) contacts are provided by D166, D284, and D285.

Belongs to the bacterial reverse transcriptase family.

This chain is Protein YkfC (ykfC), found in Escherichia coli (strain K12).